The following is a 1176-amino-acid chain: Surface-layer 125 kDa protein (1176 aa).

The N-terminal stretch at 1–30 (MAKQNKGRKFFAASATAALVASAIVPVASA) is a signal peptide. 3 SLH domains span residues 31–88 (AQLN…LEAE), 89–152 (GDVN…DLSE), and 153–216 (FADA…PKVD).

It localises to the secreted. The protein localises to the cell wall. It is found in the S-layer. The S-layer is a paracrystalline mono-layered assembly of proteins which coat the surface of bacteria. The protein is Surface-layer 125 kDa protein of Lysinibacillus sphaericus (Bacillus sphaericus).